Consider the following 50-residue polypeptide: Thrombin-like enzyme BpirSP27 (50 aa).

In terms of domain architecture, Peptidase S1 spans 1-50 (VVGGDECNINEHRSLVAIFNSTGFFCSGILLNQEWVLTASHCDSTNFQMK). A glycan (N-linked (GlcNAc...) asparagine) is linked at Asn-20. An intrachain disulfide couples Cys-26 to Cys-42. The active-site Charge relay system is His-41.

Belongs to the peptidase S1 family. Snake venom subfamily. In terms of assembly, monomer. Post-translationally, N-glycosylated. Expressed by the venom gland.

It localises to the secreted. With respect to regulation, inhibited by serine protease inhibitors PMSF, benzamidine, leupeptin and aprotinin, as well as by copper (Cu2+) and manganese (Mn2+) ions. Not inhibited by metalloprotease inhibitors EDTA, EGTA and 1,10-phenanthroline, as well as by barium (Ba2+) and calcium ion (Ca2+). Snake venom serine protease that interferes with the hemostatic system of the prey. It preferentially degrades the Bbeta chain (FGB) of fibrinogen, with minor effects on the Aalpha chain (FGA). It presents a lower ability to degrade fibrin clots than BpirSP41. It hydrolyzes chromogenic substrates S-2238 (used for testing thrombin activity), S-2222 (factor Xa), S-2266 (glandular kallikrein and factor XIa), S-2302 (plasma kallikrein, factor XIa and XIIa), and S-2251 (plasmin). It shows a decrease in the clotting time of human plasma in the presence of increasing doses of the enzyme. Its minimum coagulant dose (MCD) is 3.5 ug. It also promotes platelet aggregation in a concentration-dependent manner in the presence or absence of calcium. It also shows 20% inhibition of the hemolytic activity promoted by the complement pathways and possess only a minor role in the induction of edema and pain in rat. This Bothrops pirajai (Piraja's lancehead) protein is Thrombin-like enzyme BpirSP27.